Consider the following 144-residue polypeptide: Large ribosomal subunit protein uL16 (144 aa).

Residues 1 to 16 (MLQPKKTKFRRQQKGR) show a composition bias toward basic residues. The disordered stretch occupies residues 1–22 (MLQPKKTKFRRQQKGRMKGEAQ).

Belongs to the universal ribosomal protein uL16 family. As to quaternary structure, part of the 50S ribosomal subunit.

In terms of biological role, binds 23S rRNA and is also seen to make contacts with the A and possibly P site tRNAs. In Parabacteroides distasonis (strain ATCC 8503 / DSM 20701 / CIP 104284 / JCM 5825 / NCTC 11152), this protein is Large ribosomal subunit protein uL16.